A 926-amino-acid chain; its full sequence is Vacuolar protein sorting-associated protein 39 homolog (926 aa).

Residues 15–306 form the CNH domain; that stretch reads PVEVTCLAFQ…MTLCSGARGQ (292 aa). A CHCR repeat occupies 590-768; the sequence is DETEMARNLN…LFRTLVHPNQ (179 aa).

Belongs to the VAM6/VPS39 family. As to quaternary structure, probable core component of the homotypic fusion and vacuole protein sorting (HOPS) complex consisting of the core class C Vps proteins vps-11, vps-16, vps-18, and which further associates with vps-33.1, vps-39 and vps-41. May interact with lgg-2. Interacts with cuti-1.

The protein resides in the cytoplasm. It localises to the lysosome membrane. The protein localises to the late endosome membrane. Its subcellular location is the late endosome. It is found in the lysosome. Plays a role in vesicle-mediated protein trafficking to lysosomal compartments including the endocytic membrane transport and autophagic pathways. Believed to act in part as a component of the putative HOPS endosomal tethering complex which is proposed to be involved in the rab-5-to-rab-7 endosome conversion probably implicating sand-1, and via binding SNAREs and SNARE complexes to mediate tethering and docking events during SNARE-mediated membrane fusion. The HOPS complex is proposed to be recruited to rab-7 on the late endosomal membrane and to regulate late endocytic, phagocytic and autophagic traffic towards lysosomes. Involved in homotypic vesicle fusions between late endosomes and in heterotypic fusions between late endosomes and lysosomes. Required for fusion of endosomes. In association with lgg-2 mediates the tethering of autophagosomes with lysosomes to form autolysosomes. Within the HOPS complex, contributes to the normal development of gut granules in embryonic and adult intestinal cells. The protein is Vacuolar protein sorting-associated protein 39 homolog of Caenorhabditis elegans.